The following is a 952-amino-acid chain: Alpha-L-rhamnosidase (952 aa).

An N-terminal signal peptide occupies residues 1-21 (MKYNKLLFSLLLLAVFCFSCK). Alpha-L-rhamnose-binding positions include D520, 524–525 (RE), D532, and W594. Residue E525 is the Proton donor of the active site. Catalysis depends on E809, which acts as the Proton acceptor. An alpha-L-rhamnose-binding site is contributed by H826.

It belongs to the glycosyl hydrolase 78 family.

Its subcellular location is the cell membrane. It catalyses the reaction Hydrolysis of terminal non-reducing alpha-L-rhamnose residues in alpha-L-rhamnosides.. Functionally, alpha-L-rhamnosidase that may be involved in ulvan degradation. Ulvan is the main polysaccharide component of the Ulvales (green seaweed) cell wall. It is composed of disaccharide building blocks comprising 3-sulfated rhamnose (Rha3S) linked to D-glucuronic acid (GlcA), L-iduronic acid (IduA), or D-xylose (Xyl). The chain is Alpha-L-rhamnosidase from Formosa agariphila (strain DSM 15362 / KCTC 12365 / LMG 23005 / KMM 3901 / M-2Alg 35-1).